The primary structure comprises 89 residues: Small ribosomal subunit protein uS15 (89 aa).

This sequence belongs to the universal ribosomal protein uS15 family. Part of the 30S ribosomal subunit. Forms a bridge to the 50S subunit in the 70S ribosome, contacting the 23S rRNA.

Functionally, one of the primary rRNA binding proteins, it binds directly to 16S rRNA where it helps nucleate assembly of the platform of the 30S subunit by binding and bridging several RNA helices of the 16S rRNA. In terms of biological role, forms an intersubunit bridge (bridge B4) with the 23S rRNA of the 50S subunit in the ribosome. The polypeptide is Small ribosomal subunit protein uS15 (Shewanella putrefaciens (strain CN-32 / ATCC BAA-453)).